The following is a 418-amino-acid chain: Imidazolonepropionase (418 aa).

Fe(3+)-binding residues include His-80 and His-82. The Zn(2+) site is built by His-80 and His-82. 4-imidazolone-5-propanoate-binding residues include Arg-89, Tyr-152, and His-185. Position 152 (Tyr-152) interacts with N-formimidoyl-L-glutamate. His-250 lines the Fe(3+) pocket. His-250 lines the Zn(2+) pocket. Gln-253 contributes to the 4-imidazolone-5-propanoate binding site. Residue Asp-325 participates in Fe(3+) binding. Asp-325 lines the Zn(2+) pocket. Residues Asn-327 and Gly-329 each contribute to the N-formimidoyl-L-glutamate site. Ser-330 contacts 4-imidazolone-5-propanoate.

Belongs to the metallo-dependent hydrolases superfamily. HutI family. Zn(2+) is required as a cofactor. It depends on Fe(3+) as a cofactor.

The protein localises to the cytoplasm. The enzyme catalyses 4-imidazolone-5-propanoate + H2O = N-formimidoyl-L-glutamate. It functions in the pathway amino-acid degradation; L-histidine degradation into L-glutamate; N-formimidoyl-L-glutamate from L-histidine: step 3/3. Functionally, catalyzes the hydrolytic cleavage of the carbon-nitrogen bond in imidazolone-5-propanoate to yield N-formimidoyl-L-glutamate. It is the third step in the universal histidine degradation pathway. In Solibacter usitatus (strain Ellin6076), this protein is Imidazolonepropionase.